The sequence spans 393 residues: Elongation factor Tu (393 aa).

In terms of domain architecture, tr-type G spans 6–204; sequence KPHINVGTIG…ALEKIELPVR (199 aa). The tract at residues 15 to 22 is G1; that stretch reads GHVDHGKT. 15–22 is a GTP binding site; sequence GHVDHGKT. Position 22 (T22) interacts with Mg(2+). The G2 stretch occupies residues 58-62; the sequence is GITIS. The G3 stretch occupies residues 79–82; sequence DCPG. GTP is bound by residues 79–83 and 134–137; these read DCPGH and NKCD. The interval 134-137 is G4; that stretch reads NKCD. Residues 172–174 form a G5 region; the sequence is SAV.

The protein belongs to the TRAFAC class translation factor GTPase superfamily. Classic translation factor GTPase family. EF-Tu/EF-1A subfamily. As to quaternary structure, monomer.

The protein localises to the cytoplasm. The catalysed reaction is GTP + H2O = GDP + phosphate + H(+). In terms of biological role, GTP hydrolase that promotes the GTP-dependent binding of aminoacyl-tRNA to the A-site of ribosomes during protein biosynthesis. In Anaplasma marginale (strain St. Maries), this protein is Elongation factor Tu.